The sequence spans 1048 residues: B3 domain-containing protein Os02g0598200 (1048 aa).

The segment at 1 to 345 is disordered; it reads MDGAVRGQGC…QKERVASSDN (345 aa). Residues 16–25 show a composition bias toward basic residues; that stretch reads SFNKTKKKNR. 6 stretches are compositionally biased toward basic and acidic residues: residues 26-134, 151-162, 169-214, 243-253, 281-295, and 332-345; these read NCSD…SDDM, KKNSRNDADEEK, CSDD…GDKK, KNMKSDGDSYK, AKER…MEMK, and LKRE…SSDN. The segment at residues 375 to 468 is a DNA-binding region (TF-B3 1); the sequence is AFAFFKFVRD…TFSVRVFGID (94 aa). A disordered region spans residues 505-528; the sequence is QYQDSEDIHDGPNVSGESPRSKEP. A DNA-binding region (TF-B3 2) is located at residues 953-1048; it reads LQFCIPSTIQ…LAFQVYITRK (96 aa).

It localises to the nucleus. The chain is B3 domain-containing protein Os02g0598200 from Oryza sativa subsp. japonica (Rice).